We begin with the raw amino-acid sequence, 148 residues long: Macrodomain Ter protein (148 aa).

Belongs to the MatP family. Homodimer.

It is found in the cytoplasm. Required for spatial organization of the terminus region of the chromosome (Ter macrodomain) during the cell cycle. Prevents early segregation of duplicated Ter macrodomains during cell division. Binds specifically to matS, which is a 13 bp signature motif repeated within the Ter macrodomain. The sequence is that of Macrodomain Ter protein from Aliivibrio salmonicida (strain LFI1238) (Vibrio salmonicida (strain LFI1238)).